We begin with the raw amino-acid sequence, 489 residues long: Protein P7 (489 aa).

RNA-binding stretches follow at residues 129 to 251 (TSLI…GRML) and 321 to 351 (AGDY…FQVN).

It belongs to the phytoreovirus protein P7 family.

Its subcellular location is the virion. The protein resides in the host cytoplasm. In terms of biological role, probable component of the transcriptional machinery present in the inner capsid. Displays dsRNA binding activity and may play an important role in the sorting of viral RNA and virion assembly. Together with the RNA-directed RNA polymerase P1 and capping enzyme P5, forms an transcriptional complex positioned near the channels situated at each of the five-fold vertices of the core. The sequence is that of Protein P7 from Rice gall dwarf virus (RGDV).